Consider the following 209-residue polypeptide: Kynurenine formamidase (209 aa).

Substrate is bound at residue Trp20. Residues His50, His54, and Asp56 each contribute to the Zn(2+) site. His60 functions as the Proton donor/acceptor in the catalytic mechanism. Zn(2+) contacts are provided by His161 and Glu173.

It belongs to the Cyclase 1 superfamily. KynB family. Homodimer. Zn(2+) is required as a cofactor.

The catalysed reaction is N-formyl-L-kynurenine + H2O = L-kynurenine + formate + H(+). It participates in amino-acid degradation; L-tryptophan degradation via kynurenine pathway; L-kynurenine from L-tryptophan: step 2/2. Catalyzes the hydrolysis of N-formyl-L-kynurenine to L-kynurenine, the second step in the kynurenine pathway of tryptophan degradation. The chain is Kynurenine formamidase from Bacillus cytotoxicus (strain DSM 22905 / CIP 110041 / 391-98 / NVH 391-98).